The primary structure comprises 151 residues: Large ribosomal subunit protein uL15 (151 aa).

Residues 1 to 58 (MELNQLKSVPKARNHKTKTLGRGHGSGLGKTSGRGQKGQKARKSGLTRPGFEGGQTPL) form a disordered region. A compositionally biased stretch (basic residues) spans 10–21 (PKARNHKTKTLG). Over residues 22 to 36 (RGHGSGLGKTSGRGQ) the composition is skewed to gly residues.

This sequence belongs to the universal ribosomal protein uL15 family. As to quaternary structure, part of the 50S ribosomal subunit.

In terms of biological role, binds to the 23S rRNA. This chain is Large ribosomal subunit protein uL15, found in Mycoplasma pneumoniae (strain ATCC 29342 / M129 / Subtype 1) (Mycoplasmoides pneumoniae).